The chain runs to 321 residues: Flagellin C (321 aa).

Belongs to the bacterial flagellin family.

The protein localises to the secreted. It localises to the bacterial flagellum. Functionally, flagellin is the subunit protein which polymerizes to form the filaments of bacterial flagella. The sequence is that of Flagellin C (flaC) from Rhizobium meliloti (strain 1021) (Ensifer meliloti).